The chain runs to 594 residues: Proline--tRNA ligase (594 aa).

The protein belongs to the class-II aminoacyl-tRNA synthetase family. ProS type 1 subfamily. Homodimer.

The protein localises to the cytoplasm. It catalyses the reaction tRNA(Pro) + L-proline + ATP = L-prolyl-tRNA(Pro) + AMP + diphosphate. In terms of biological role, catalyzes the attachment of proline to tRNA(Pro) in a two-step reaction: proline is first activated by ATP to form Pro-AMP and then transferred to the acceptor end of tRNA(Pro). As ProRS can inadvertently accommodate and process non-cognate amino acids such as alanine and cysteine, to avoid such errors it has two additional distinct editing activities against alanine. One activity is designated as 'pretransfer' editing and involves the tRNA(Pro)-independent hydrolysis of activated Ala-AMP. The other activity is designated 'posttransfer' editing and involves deacylation of mischarged Ala-tRNA(Pro). The misacylated Cys-tRNA(Pro) is not edited by ProRS. This chain is Proline--tRNA ligase, found in Synechococcus sp. (strain WH7803).